A 135-amino-acid chain; its full sequence is Small ribosomal subunit protein uS12 (135 aa).

The interval 1-20 is disordered; it reads MPTINQLVRKGRHSKVTKSK. A compositionally biased stretch (basic residues) spans 9–18; the sequence is RKGRHSKVTK.

The protein belongs to the universal ribosomal protein uS12 family. In terms of assembly, part of the 30S ribosomal subunit. Contacts proteins S8 and S17. May interact with IF1 in the 30S initiation complex.

Its function is as follows. With S4 and S5 plays an important role in translational accuracy. Functionally, interacts with and stabilizes bases of the 16S rRNA that are involved in tRNA selection in the A site and with the mRNA backbone. Located at the interface of the 30S and 50S subunits, it traverses the body of the 30S subunit contacting proteins on the other side and probably holding the rRNA structure together. The combined cluster of proteins S8, S12 and S17 appears to hold together the shoulder and platform of the 30S subunit. The chain is Small ribosomal subunit protein uS12 from Lactobacillus acidophilus (strain ATCC 700396 / NCK56 / N2 / NCFM).